An 884-amino-acid polypeptide reads, in one-letter code: MGARCRSFSALLLLLQVSSWLCQELEPESCSPGFSSEVYTFPVPERHLERGHVLGRVRFEGCTGRPRTAFFSEDSRFKVATDGTITVKRHLKLHKLETSFLVRARDSSHRELSTKVTLKSMGHHHHRHHHRDPASESNPELLMFPSVYPGLRRQKRDWVIPPISCPENEKGEFPKNLVQIKSNRDKETKVFYSITGQGADKPPVGVFIIERETGWLKVTQPLDREAIAKYILYSHAVSSNGEAVEDPMEIVITVTDQNDNRPEFTQEVFEGSVAEGAVPGTSVMKVSATDADDDVNTYNAAIAYTIVSQDPELPHKNMFTVNRDTGVISVLTSGLDRESYPTYTLVVQAADLQGEGLSTTAKAVITVKDINDNAPVFNPSTYQGQVPENEVNARIATLKVTDDDAPNTPAWKAVYTVVNDPDQQFVVVTDPTTNDGILKTAKGLDFEAKQQYILHVRVENEEPFEGSLVPSTATVTVDVVDVNEAPIFMPAERRVEVPEDFGVGQEITSYTAREPDTFMDQKITYRIWRDTANWLEINPETGAIFTRAEMDREDAEHVKNSTYVALIIATDDGSPIATGTGTLLLVLLDVNDNAPIPEPRNMQFCQRNPQPHIITILDPDLPPNTSPFTAELTHGASVNWTIEYNDAAQESLILQPRKDLEIGEYKIHLKLADNQNKDQVTTLDVHVCDCEGTVNNCMKAGIVAAGLQVPAILGILGGILALLILILLLLLFLRRRTVVKEPLLPPDDDTRDNVYYYDEEGGGEEDQDFDLSQLHRGLDARPEVTRNDVAPTLMSVPQYRPRPANPDEIGNFIDENLKAADSDPTAPPYDSLLVFDYEGSGSEAASLSSLNSSESDQDQDYDYLNEWGNRFKKLADMYGGGEDD.

A signal peptide spans 1–23 (MGARCRSFSALLLLLQVSSWLCQ). Positions 24-156 (ELEPESCSPG…VYPGLRRQKR (133 aa)) are excised as a propeptide. A disordered region spans residues 119 to 139 (KSMGHHHHRHHHRDPASESNP). Over residues 121–131 (MGHHHHRHHHR) the composition is skewed to basic residues. Cadherin domains lie at 157-264 (DWVI…RPEF), 265-377 (TQEV…APVF), 378-488 (NPST…APIF), 489-595 (MPAE…DNAP), and 596-699 (IPEP…NCMK). The Extracellular segment spans residues 157 to 709 (DWVIPPISCP…AGIVAAGLQV (553 aa)). D259 contacts Ca(2+). O-linked (Man...) serine glycosylation is found at S282 and S287. D290 provides a ligand contact to Ca(2+). Residues T360, T472, T474, and T511 are each glycosylated (O-linked (Man...) threonine). Residue N560 is glycosylated (N-linked (GlcNAc...) asparagine). O-linked (Man...) threonine glycosylation is found at T578, T580, and T582. N639 carries an N-linked (GlcNAc...) asparagine glycan. The chain crosses the membrane as a helical span at residues 710–733 (PAILGILGGILALLILILLLLLFL). Over 734–884 (RRRTVVKEPL…ADMYGGGEDD (151 aa)) the chain is Cytoplasmic. Residues 749–808 (DTRDNVYYYDEEGGGEEDQDFDLSQLHRGLDARPEVTRNDVAPTLMSVPQYRPRPANPDE) form a disordered region. Y755, Y756, and Y757 each carry phosphotyrosine; by SRC. Residues 757-769 (YDEEGGGEEDQDF) are compositionally biased toward acidic residues. A required for binding CTNND1 and PSEN1 region spans residues 760-771 (EGGGEEDQDFDL). At S772 the chain carries Phosphoserine. The segment covering 776-786 (RGLDARPEVTR) has biased composition (basic and acidic residues). 4 positions are modified to phosphoserine: S795, S840, S842, and S848. The segment at 813 to 884 (IDENLKAADS…ADMYGGGEDD (72 aa)) is required for binding alpha, beta and gamma catenins.

In terms of assembly, homodimer; disulfide-linked. Component of an E-cadherin/ catenin adhesion complex composed of at least E-cadherin/CDH1, beta-catenin/CTNNB1 or gamma-catenin/JUP, and potentially alpha-catenin/CTNNA1; the complex is located to adherens junctions. Found in a complex composed of CDH1, RAP1A and PKP3; PKP3 acts as a scaffold protein within the complex, the complex is required for CDH1 localization to mature desmosome cell junctions. Interacts with the TRPV4 and CTNNB1 complex. Interacts with CTNND1. The stable association of CTNNA1 is controversial as CTNNA1 was shown not to bind to F-actin when assembled in the complex. Alternatively, the CTNNA1-containing complex may be linked to F-actin by other proteins such as LIMA1. Interaction with PSEN1, cleaves CDH1 resulting in the disassociation of cadherin-based adherens junctions (CAJs). Interacts with AJAP1 and DLGAP5. Interacts with TBC1D2. Interacts with LIMA1. Interacts with CAV1. Interacts with PIP5K1C. Interacts with RAB8B. Interacts with DDR1; this stabilizes CDH1 at the cell surface and inhibits its internalization. Interacts with RAPGEF2. Interacts with KLRG1. Forms a ternary complex composed of ADAM10, CADH1 and EPHA4; within the complex, CADH1 is cleaved by ADAM10 which disrupts adherens junctions. Interacts with SPEF1. Interacts with CTNNB1 and PKP2. Interacts with AMOTL2; the interaction may facilitate binding of radial actin fibers to cell junction complexes. Interacts with DSG3; the interaction is required for CDH1 localization to developing adherens junctions. During apoptosis or with calcium influx, cleaved by a membrane-bound metalloproteinase (ADAM10), PS1/gamma-secretase and caspase-3. Processing by the metalloproteinase, induced by calcium influx, causes disruption of cell-cell adhesion and the subsequent release of beta-catenin into the cytoplasm. The residual membrane-tethered cleavage product is rapidly degraded via an intracellular proteolytic pathway. Cleavage by caspase-3 releases the cytoplasmic tail resulting in disintegration of the actin microfilament system. The gamma-secretase-mediated cleavage promotes disassembly of adherens junctions. During development of the cochlear organ of Corti, cleavage by ADAM10 at adherens junctions promotes pillar cell separation. Post-translationally, O-glycosylated. O-manosylated by TMTC1, TMTC2, TMTC3 or TMTC4. Ser-287 and Thr-511 are O-manosylated by TMTC2 or TMTC4 but not TMTC1 or TMTC3. In terms of processing, N-glycosylation at Asn-639 is essential for expression, folding and trafficking. Addition of bisecting N-acetylglucosamine by MGAT3 modulates its cell membrane location. Ubiquitinated by a SCF complex containing SKP2, which requires prior phosphorylation by CK1/CSNK1A1. Ubiquitinated by CBLL1/HAKAI, requires prior phosphorylation at Tyr-756. Expressed in inner and outer pillar cells of the organ of Corti (at protein level). Expressed in granuloma macrophages (at protein level). Expressed in the epidermal keratinocytes of the skin from birth (at protein level). Expressed in non-neural epithelial tissues.

It is found in the cell junction. Its subcellular location is the adherens junction. The protein localises to the cell membrane. It localises to the endosome. The protein resides in the golgi apparatus. It is found in the trans-Golgi network. Its subcellular location is the cytoplasm. The protein localises to the desmosome. Its function is as follows. Cadherins are calcium-dependent cell adhesion proteins. They preferentially interact with themselves in a homophilic manner in connecting cells; cadherins may thus contribute to the sorting of heterogeneous cell types. CDH1 is involved in mechanisms regulating cell-cell adhesions, mobility and proliferation of epithelial cells. Promotes organization of radial actin fiber structure and cellular response to contractile forces, via its interaction with AMOTL2 which facilitates anchoring of radial actin fibers to CDH1 junction complexes at the cell membrane. Plays a role in the early stages of desmosome cell-cell junction formation via facilitating the recruitment of DSG2 and DSP to desmosome plaques. Has a potent invasive suppressor role. It is a ligand for integrin alpha-E/beta-7. E-Cad/CTF2 promotes non-amyloidogenic degradation of Abeta precursors. Has a strong inhibitory effect on APP C99 and C83 production. In terms of biological role, (Microbial infection) Does not function as a receptor for L.monocytogenes internalin A (InlA); mutating a single surface-exposed residue confers receptor activity to this protein and promotes uptake of the bacteria. In Mus musculus (Mouse), this protein is Cadherin-1 (Cdh1).